The sequence spans 145 residues: MLIFLWCGAVCVSLLGAANIPPHPLNLINFMEMIRYTIPCEKTWGEYADYGCYCGAGGSGRPIDALDRCCYVHDNCYGDAEKKHKCNPKTQSYSYKLTKRTIICYGAAGTCARIVCDCDRTAALCFGNSEYIERHKNIDTKRHCR.

The first 17 residues, 1–17 (MLIFLWCGAVCVSLLGA), serve as a signal peptide directing secretion. Residues 18–25 (ANIPPHPL) constitute a propeptide that is removed on maturation. Intrachain disulfides connect Cys-52/Cys-144, Cys-54/Cys-70, Cys-69/Cys-125, Cys-76/Cys-118, Cys-86/Cys-111, and Cys-104/Cys-116. Residues Tyr-53, Gly-55, and Gly-57 each contribute to the Ca(2+) site. The active site involves His-73. Position 74 (Asp-74) interacts with Ca(2+). The active site involves Asp-119.

It belongs to the phospholipase A2 family. Group I subfamily. D49 sub-subfamily. As to quaternary structure, heterodimer; disulfide-linked. The A chains have phospholipase A2 activity and the B chains show homology with the basic protease inhibitors. The A2 chain is found in beta-3 and beta-4 bungarotoxins. The cofactor is Ca(2+). Expressed by the venom gland.

The protein localises to the secreted. The enzyme catalyses a 1,2-diacyl-sn-glycero-3-phosphocholine + H2O = a 1-acyl-sn-glycero-3-phosphocholine + a fatty acid + H(+). Snake venom phospholipase A2 (PLA2) that inhibits neuromuscular transmission by blocking acetylcholine release from the nerve termini. PLA2 catalyzes the calcium-dependent hydrolysis of the 2-acyl groups in 3-sn-phosphoglycerides. The protein is Basic phospholipase A2 beta-bungarotoxin A2 chain of Bungarus multicinctus (Many-banded krait).